The sequence spans 363 residues: MSQSSEECAADQGQTCEETQKLQVAAASIDVEEPCSSPHLMATSLKDQTSEETQVSKDVEEPCSSSQLLMASDQDDSEDETASTSSDLQHPYDSSSESTEDLDDQEVQGSPVIPPDQSDSTDLPVMTVDGKVDFLVNYMLYKYQVKEVMSMNDIMTLIVREDEDRFHEILMRASERMEMVFGLDVKEVDPINHCYALFIKLGLTYDGMRNDEYSFPKTGLLILILGVVFMKGNRATEEEIWEVLNPMGIYAGMTHFMFGDPRELITDEFVREQYLEYQPIANSDPIQYEYVWGLRAKAETSKMRVLEFVAKVHGSDPTVFLSQYEEALIEEEERTLTMLLEHADSSSTSGESSSDTSSNFSQV.

Residues 33-124 form a disordered region; sequence EPCSSPHLMA…PDQSDSTDLP (92 aa). Positions 82 to 97 are enriched in low complexity; it reads ASTSSDLQHPYDSSSE. Residues 128–327 enclose the MAGE domain; that stretch reads VDGKVDFLVN…TVFLSQYEEA (200 aa). Positions 342–363 are disordered; sequence HADSSSTSGESSSDTSSNFSQV.

This chain is Melanoma-associated antigen B16 (Mageb16), found in Mus musculus (Mouse).